We begin with the raw amino-acid sequence, 167 residues long: MTRKQRRLLMIGGAGVVLIVAVGLVLNALRDSIVFFSTPKMVAEQHIEAGKRFRLGGVVEPGSLQRGEQLRVSFKVTDGAASLPVAYKGILPDLFREGQGVIAEGSLDKAGVFEADTVLAKHDEKYMPKEVADALKKDGHWKDDYGKKSPGETTAGQTSANAAEGGK.

Residues 1–7 lie on the Cytoplasmic side of the membrane; the sequence is MTRKQRR. The chain crosses the membrane as a helical; Signal-anchor for type II membrane protein span at residues 8-28; it reads LLMIGGAGVVLIVAVGLVLNA. Topologically, residues 29-167 are periplasmic; the sequence is LRDSIVFFST…TSANAAEGGK (139 aa). Heme-binding residues include histidine 122 and tyrosine 126. Over residues 137–150 the composition is skewed to basic and acidic residues; sequence KDGHWKDDYGKKSP. The tract at residues 137 to 167 is disordered; the sequence is KDGHWKDDYGKKSPGETTAGQTSANAAEGGK. The segment covering 151–161 has biased composition (polar residues); the sequence is GETTAGQTSAN.

This sequence belongs to the CcmE/CycJ family.

Its subcellular location is the cell inner membrane. Functionally, heme chaperone required for the biogenesis of c-type cytochromes. Transiently binds heme delivered by CcmC and transfers the heme to apo-cytochromes in a process facilitated by CcmF and CcmH. The sequence is that of Cytochrome c-type biogenesis protein CcmE from Rhodopseudomonas palustris (strain ATCC BAA-98 / CGA009).